Consider the following 146-residue polypeptide: uncharacterized protein (146 aa).

One can recognise an N-acetyltransferase domain in the interval Met-1 to Asp-120.

The protein belongs to the acetyltransferase family.

This is an uncharacterized protein from Streptococcus pyogenes serotype M6 (strain ATCC BAA-946 / MGAS10394).